Reading from the N-terminus, the 706-residue chain is K(+)-insensitive pyrophosphate-energized proton pump (706 aa).

The next 5 helical transmembrane spans lie at 1–21 (MTALWVIVLCGALSIVYAIWA), 62–82 (VVIFALLAYFLGILVAIGFAI), 83–103 (GAILSGAAGFIGMNVSVRANV), 129–149 (LLVAGLALLGVTLYFIYLIHF), and 164–184 (VALGFGASLISIFARLGGGIF). Substrate is bound at residue Lys186. Residues Asp189, Asp193, Asn216, and Asp219 each contribute to the Mg(2+) site. 6 helical membrane-spanning segments follow: residues 231–251 (LFETYAVTAVATMVLAAIFFG), 263–283 (TLPLAIGGICILTSIAGTFFV), 300–320 (IATGVLSLVGVGVVIHQLIGF), 330–350 (GLALFECGIVGLAVTGLIIWI), 393–413 (IVIIAGILITYSLAGLFGIAI), and 414–434 (ATTTMLALAGMIVALDAFGPV). Asp436 is a Mg(2+) binding site. A run of 4 helical transmembrane segments spans residues 467–487 (AVTKGYAIGSAGLGALVLFAA), 516–536 (YVVVGLLFGGLLPYLFGAMGM), 585–605 (IIPSLLPVLSPIFVYFAIYAI), and 616–636 (AFSAVGAMLLGVIVTGLFVAI). The Ca(2+) site is built by Asp646, Asp672, and Asp676. Residue Lys679 participates in substrate binding. Residues 685–705 (AVNPMIKITNIVALLLLAILA) form a helical membrane-spanning segment.

This sequence belongs to the H(+)-translocating pyrophosphatase (TC 3.A.10) family. K(+)-insensitive subfamily. As to quaternary structure, homodimer. Requires Mg(2+) as cofactor.

It localises to the cell inner membrane. It catalyses the reaction diphosphate + H2O + H(+)(in) = 2 phosphate + 2 H(+)(out). In terms of biological role, proton pump that utilizes the energy of pyrophosphate hydrolysis as the driving force for proton movement across the membrane. Generates a proton motive force. This is K(+)-insensitive pyrophosphate-energized proton pump from Rhodopseudomonas palustris (strain ATCC BAA-98 / CGA009).